We begin with the raw amino-acid sequence, 160 residues long: Cytochrome b6-f complex subunit 4 (160 aa).

3 helical membrane passes run 36–56, 95–115, and 131–151; these read LLYI…GLAV, LLGV…PFLE, and TVFL…ALPI.

This sequence belongs to the cytochrome b family. PetD subfamily. As to quaternary structure, the 4 large subunits of the cytochrome b6-f complex are cytochrome b6, subunit IV (17 kDa polypeptide, petD), cytochrome f and the Rieske protein, while the 4 small subunits are petG, petL, petM and petN. The complex functions as a dimer.

Its subcellular location is the plastid. The protein localises to the chloroplast thylakoid membrane. Its function is as follows. Component of the cytochrome b6-f complex, which mediates electron transfer between photosystem II (PSII) and photosystem I (PSI), cyclic electron flow around PSI, and state transitions. This Chara vulgaris (Common stonewort) protein is Cytochrome b6-f complex subunit 4.